We begin with the raw amino-acid sequence, 388 residues long: Yellow-related salivary protein SP03 (388 aa).

Residues 1–18 (MKIFLCLIAVVSLQGVLA) form the signal peptide. N29 carries N-linked (GlcNAc...) asparagine glycosylation.

This sequence belongs to the major royal jelly protein family. In terms of tissue distribution, female salivary gland (at protein level).

It is found in the secreted. In terms of biological role, probably modulates blood feeding of sand flies on vertebrate species by binding and sequestering different mediators involved in the host response. Binds biogenic amines. Binds noradrenaline with medium affinity. Binds octopamine with low affinity. Poorly binds histamine, adrenaline and serotonin. This is Yellow-related salivary protein SP03 from Phlebotomus perniciosus (Phlebotomine sand fly).